A 128-amino-acid polypeptide reads, in one-letter code: Nanos homolog 1 (128 aa).

The tract at residues 7-23 is essential for its translational repressor activity; the sequence is FDSWSDYLGLSSLISRG. The interval 23-56 is disordered; the sequence is GLQPRGEGENPSPRWNVSCPAPAEPLPSKEPEGR. A Nanos-type zinc finger spans residues 60–114; it reads GCGFCRSNKEAMSLYSSHRLRSLDGRVLCPVLRGYTCPLCGANGDWAHTMRYCPL. Zn(2+)-binding residues include Cys61, Cys64, His77, Cys88, Cys96, Cys99, His107, and Cys112. Short sequence motifs (C2HC) lie at residues 61–88 and 96–112; these read CGFC…RVLC and CPLC…MRYC.

It belongs to the nanos family. In terms of assembly, interacts with ccnb1.

It is found in the cytoplasm. The protein localises to the perinuclear region. Its function is as follows. Acts as a translational repressor. Can mediate repression affecting different steps in the translation process: cap-driven, IRES-driven, polyadenylated RNAs or nonpolyadenylated RNAs. Essential for the development of primordial germ cells (PGCs) by ensuring their proper migration and survival. The sequence is that of Nanos homolog 1 (nanos1) from Xenopus borealis (Kenyan clawed frog).